Consider the following 261-residue polypeptide: tRNA pseudouridine synthase A (261 aa).

The active-site Nucleophile is the D51. Residue Y109 coordinates substrate.

It belongs to the tRNA pseudouridine synthase TruA family. As to quaternary structure, homodimer.

It catalyses the reaction uridine(38/39/40) in tRNA = pseudouridine(38/39/40) in tRNA. Formation of pseudouridine at positions 38, 39 and 40 in the anticodon stem and loop of transfer RNAs. The sequence is that of tRNA pseudouridine synthase A from Shewanella frigidimarina (strain NCIMB 400).